The following is a 266-amino-acid chain: Glutamate racemase (266 aa).

Substrate-binding positions include 9-10 (DS) and 41-42 (YG). The active-site Proton donor/acceptor is Cys73. 74–75 (NS) contributes to the substrate binding site. The active-site Proton donor/acceptor is Cys183. 184 to 185 (TH) contacts substrate.

This sequence belongs to the aspartate/glutamate racemases family.

The enzyme catalyses L-glutamate = D-glutamate. Its pathway is cell wall biogenesis; peptidoglycan biosynthesis. Provides the (R)-glutamate required for cell wall biosynthesis. This is Glutamate racemase from Shewanella loihica (strain ATCC BAA-1088 / PV-4).